The sequence spans 78 residues: Probable [Fe-S]-dependent transcriptional repressor (78 aa).

Iron-sulfur cluster is bound by residues cysteine 56, cysteine 61, cysteine 64, and cysteine 70.

Belongs to the FeoC family.

In terms of biological role, may function as a transcriptional regulator that controls feoABC expression. In Escherichia coli O7:K1 (strain IAI39 / ExPEC), this protein is Probable [Fe-S]-dependent transcriptional repressor.